The chain runs to 125 residues: Ribosome-binding factor A (125 aa).

This sequence belongs to the RbfA family. Monomer. Binds 30S ribosomal subunits, but not 50S ribosomal subunits or 70S ribosomes.

It localises to the cytoplasm. One of several proteins that assist in the late maturation steps of the functional core of the 30S ribosomal subunit. Associates with free 30S ribosomal subunits (but not with 30S subunits that are part of 70S ribosomes or polysomes). Required for efficient processing of 16S rRNA. May interact with the 5'-terminal helix region of 16S rRNA. The sequence is that of Ribosome-binding factor A from Xylella fastidiosa (strain M23).